The sequence spans 223 residues: DNA mismatch repair protein MutH (223 aa).

It belongs to the MutH family.

It localises to the cytoplasm. In terms of biological role, sequence-specific endonuclease that cleaves unmethylated GATC sequences. It is involved in DNA mismatch repair. The chain is DNA mismatch repair protein MutH from Haemophilus influenzae (strain 86-028NP).